The sequence spans 660 residues: Acetyl-coenzyme A synthetase (660 aa).

CoA contacts are provided by residues 197–200 (RGGK) and T317. ATP contacts are provided by residues 397–399 (GEP), 421–426 (DTWWQT), D512, and R528. S536 contributes to the CoA binding site. R539 provides a ligand contact to ATP. Mg(2+) is bound by residues V550, H552, and V555. K625 bears the N6-acetyllysine mark.

Belongs to the ATP-dependent AMP-binding enzyme family. Mg(2+) serves as cofactor. Acetylated. Deacetylation by the SIR2-homolog deacetylase activates the enzyme.

It catalyses the reaction acetate + ATP + CoA = acetyl-CoA + AMP + diphosphate. Catalyzes the conversion of acetate into acetyl-CoA (AcCoA), an essential intermediate at the junction of anabolic and catabolic pathways. AcsA undergoes a two-step reaction. In the first half reaction, AcsA combines acetate with ATP to form acetyl-adenylate (AcAMP) intermediate. In the second half reaction, it can then transfer the acetyl group from AcAMP to the sulfhydryl group of CoA, forming the product AcCoA. The protein is Acetyl-coenzyme A synthetase of Burkholderia thailandensis (strain ATCC 700388 / DSM 13276 / CCUG 48851 / CIP 106301 / E264).